A 358-amino-acid polypeptide reads, in one-letter code: Putative KilA-N domain-containing protein 313L (358 aa).

The 110-residue stretch at 15 to 124 folds into the KilA-N domain; sequence NFYYGLFGDF…DKCNQIVIDF (110 aa). A coiled-coil region spans residues 126-245; that stretch reads VVEFKEKEKE…VKLEISVEDR (120 aa).

This sequence belongs to the IIV-6 006L/238R/313L/468L family.

This is Putative KilA-N domain-containing protein 313L from Acheta domesticus (House cricket).